A 3093-amino-acid polypeptide reads, in one-letter code: Genome polyprotein (3093 aa).

In terms of domain architecture, Peptidase S30 spans 255–403 (KRLLRHVHQA…TTTGERIEYY (149 aa)). Catalysis depends on for P1 proteinase activity residues histidine 311, aspartate 323, and serine 355. In terms of domain architecture, Peptidase C6 spans 690 to 809 (HYVPKVGYCY…ASELKEYEIG (120 aa)). Active-site for helper component proteinase activity residues include cysteine 698 and histidine 769. Residues 1215–1366 (RVLADKDNEF…AQKSLDIMTL (152 aa)) form the Helicase ATP-binding domain. 1228-1235 (GHVGCGKS) serves as a coordination point for ATP. The DEVH box signature appears at 1316 to 1319 (DEVH). The Helicase C-terminal domain maps to 1367-1546 (PTMTPLDFVK…QVPPVLRNVN (180 aa)). The short motif at 1883-1895 (DKVRKKANVHAMQ) is the Nuclear localization signal element. O-(5'-phospho-RNA)-tyrosine is present on tyrosine 1915. A Peptidase C4 domain is found at 2041–2257 (SKALYGGPRC…VDVGGLYIHN (217 aa)). Active-site for nuclear inclusion protein A activity residues include histidine 2082, aspartate 2121, and cysteine 2193. Residues 2516-2639 (EWFIDADGSQ…NANEEAKDVV (124 aa)) enclose the RdRp catalytic domain. A compositionally biased stretch (low complexity) spans 2800-2826 (NAAATSGATTPAQNVGAGTTTPAKATP). Residues 2800-2842 (NAAATSGATTPAQNVGAGTTTPAKATPQSGRRPSFGSLIDNPI) are disordered.

Belongs to the potyviridae genome polyprotein family. VPg is uridylylated by the polymerase and is covalently attached to the 5'-end of the genomic RNA. This uridylylated form acts as a nucleotide-peptide primer for the polymerase. Post-translationally, genome polyprotein of potyviruses undergoes post-translational proteolytic processing by the main proteinase NIa-pro resulting in the production of at least ten individual proteins. The P1 proteinase and the HC-pro cleave only their respective C-termini autocatalytically. 6K1 is essential for proper proteolytic separation of P3 from CI.

It localises to the host cytoplasmic vesicle. The protein localises to the virion. The enzyme catalyses RNA(n) + a ribonucleoside 5'-triphosphate = RNA(n+1) + diphosphate. It carries out the reaction Hydrolyzes glutaminyl bonds, and activity is further restricted by preferences for the amino acids in P6 - P1' that vary with the species of potyvirus, e.g. Glu-Xaa-Xaa-Tyr-Xaa-Gln-|-(Ser or Gly) for the enzyme from tobacco etch virus. The natural substrate is the viral polyprotein, but other proteins and oligopeptides containing the appropriate consensus sequence are also cleaved.. It catalyses the reaction Hydrolyzes a Gly-|-Gly bond at its own C-terminus, commonly in the sequence -Tyr-Xaa-Val-Gly-|-Gly, in the processing of the potyviral polyprotein.. In terms of biological role, required for aphid transmission and also has proteolytic activity. Only cleaves a Gly-Gly dipeptide at its own C-terminus. Interacts with virions and aphid stylets. Acts as a suppressor of RNA-mediated gene silencing, also known as post-transcriptional gene silencing (PTGS), a mechanism of plant viral defense that limits the accumulation of viral RNAs. May have RNA-binding activity. Functionally, has helicase activity. It may be involved in replication. Its function is as follows. Indispensable for virus replication. Reduces the abundance of host transcripts related to jasmonic acid biosynthesis therefore altering the host defenses. In order to increase its own stability, decreases host protein degradation pathways. Indispensable for virus replication. In terms of biological role, mediates the cap-independent, EIF4E-dependent translation of viral genomic RNAs. Binds to the cap-binding site of host EIF4E and thus interferes with the host EIF4E-dependent mRNA export and translation. VPg-RNA directly binds EIF4E and is a template for transcription. Also forms trimeric complexes with EIF4E-EIF4G, which are templates for translation. Functionally, has RNA-binding and proteolytic activities. Its function is as follows. An RNA-dependent RNA polymerase that plays an essential role in the virus replication. Involved in aphid transmission, cell-to-cell and systemis movement, encapsidation of the viral RNA and in the regulation of viral RNA amplification. This chain is Genome polyprotein, found in Brome streak virus (strain 11-Cal) (BStV).